The following is a 318-amino-acid chain: Protein FAM228A (318 aa).

Positions 259-297 (SQESKRHEKKGLALGTGQHRPRSWAAGEGQQRRRSQPVD) are disordered.

This sequence belongs to the FAM228 family.

The protein is Protein FAM228A (FAM228A) of Bos taurus (Bovine).